The primary structure comprises 377 residues: Ribosomal RNA large subunit methyltransferase G (377 aa).

Belongs to the methyltransferase superfamily. RlmG family.

It localises to the cytoplasm. The enzyme catalyses guanosine(1835) in 23S rRNA + S-adenosyl-L-methionine = N(2)-methylguanosine(1835) in 23S rRNA + S-adenosyl-L-homocysteine + H(+). Functionally, specifically methylates the guanine in position 1835 (m2G1835) of 23S rRNA. The sequence is that of Ribosomal RNA large subunit methyltransferase G from Shewanella sp. (strain MR-4).